A 593-amino-acid chain; its full sequence is Proline dehydrogenase 1, mitochondrial (593 aa).

A disordered region spans residues P24 to E44. 2 positions are modified to N6-acetyllysine: K368 and K479.

Belongs to the proline oxidase family. FAD serves as cofactor.

It localises to the mitochondrion matrix. The enzyme catalyses L-proline + a quinone = (S)-1-pyrroline-5-carboxylate + a quinol + H(+). The protein operates within amino-acid degradation; L-proline degradation into L-glutamate; L-glutamate from L-proline: step 1/2. In terms of biological role, converts proline to delta-1-pyrroline-5-carboxylate. The sequence is that of Proline dehydrogenase 1, mitochondrial from Bos taurus (Bovine).